Reading from the N-terminus, the 360-residue chain is Histidinol-phosphate aminotransferase (360 aa).

Lys223 is modified (N6-(pyridoxal phosphate)lysine).

This sequence belongs to the class-II pyridoxal-phosphate-dependent aminotransferase family. Histidinol-phosphate aminotransferase subfamily. As to quaternary structure, homodimer. It depends on pyridoxal 5'-phosphate as a cofactor.

It carries out the reaction L-histidinol phosphate + 2-oxoglutarate = 3-(imidazol-4-yl)-2-oxopropyl phosphate + L-glutamate. Its pathway is amino-acid biosynthesis; L-histidine biosynthesis; L-histidine from 5-phospho-alpha-D-ribose 1-diphosphate: step 7/9. This Bacillus subtilis subsp. natto protein is Histidinol-phosphate aminotransferase.